The following is a 523-amino-acid chain: Putative UDP-glucuronosyltransferase ugt-50 (523 aa).

The N-terminal stretch at 1–25 is a signal peptide; it reads MHYSQMRWMFFCLTALLHGSFIVNA. Asn84, Asn248, Asn283, and Asn487 each carry an N-linked (GlcNAc...) asparagine glycan. A helical membrane pass occupies residues 490–508; that stretch reads IIEHNHLDLFFYLCIISLL.

This sequence belongs to the UDP-glycosyltransferase family.

The protein resides in the membrane. It catalyses the reaction glucuronate acceptor + UDP-alpha-D-glucuronate = acceptor beta-D-glucuronoside + UDP + H(+). The protein is Putative UDP-glucuronosyltransferase ugt-50 (ugt-50) of Caenorhabditis elegans.